Here is a 530-residue protein sequence, read N- to C-terminus: Alpha-(1,3)-fucosyltransferase 4 (530 aa).

Disordered stretches follow at residues 1-48 (MRRL…RAVP) and 66-113 (HLGG…TPAD). The Cytoplasmic portion of the chain corresponds to 1-147 (MRRLWGAARK…GGRRRWRRGR (147 aa)). The span at 88–106 (ASGERQRRLEPQLQHESRC) shows a compositional bias: basic and acidic residues. The chain crosses the membrane as a helical; Signal-anchor for type II membrane protein span at residues 148–172 (GLPWTVCVLAAAGLTCTALITYACW). Residues 173–530 (GQLPPLPWAS…IRNLASWFER (358 aa)) lie on the Lumenal side of the membrane. N-linked (GlcNAc...) asparagine glycosylation is found at Asn-216 and Asn-315.

The protein belongs to the glycosyltransferase 10 family.

The protein resides in the golgi apparatus. It localises to the golgi stack membrane. It catalyses the reaction a beta-D-galactosyl-(1-&gt;4)-N-acetyl-beta-D-glucosaminyl derivative + GDP-beta-L-fucose = a beta-D-galactosyl-(1-&gt;4)-[alpha-L-fucosyl-(1-&gt;3)]-N-acetyl-beta-D-glucosaminyl derivative + GDP + H(+). The catalysed reaction is an N-acetyl-alpha-neuraminyl-(2-&gt;3)-beta-D-galactosyl-(1-&gt;4)-N-acetyl-beta-D-glucosaminyl derivative + GDP-beta-L-fucose = an alpha-Neu5Ac-(2-&gt;3)-beta-D-Gal-(1-&gt;4)-[alpha-L-Fuc-(1-&gt;3)]-beta-D-GlcNAc derivative + GDP + H(+). The enzyme catalyses an alpha-Neu5Ac-(2-&gt;3)-beta-D-Gal-(1-&gt;4)-beta-D-GlcNAc-(1-&gt;3)-beta-D-Gal-(1-&gt;4)-beta-D-GlcNAc derivative + GDP-beta-L-fucose = an alpha-Neu5Ac-(2-&gt;3)-beta-D-Gal-(1-&gt;4)-beta-D-GlcNAc-(1-&gt;3)-beta-D-Gal-(1-&gt;4)-[alpha-L-Fuc-(1-&gt;3)]-beta-D-GlcNAc derivative + GDP + H(+). It carries out the reaction an alpha-Neu5Ac-(2-&gt;3)-beta-D-Gal-(1-&gt;4)-beta-D-GlcNAc6S derivative + GDP-beta-L-fucose = an alpha-Neu5Ac-(2-&gt;3)-beta-D-Gal-(1-&gt;4)-[alpha-L-Fuc-(1-&gt;3)]-beta-D-GlcNAc6S derivative + GDP + H(+). It participates in protein modification; protein glycosylation. Functionally, catalyzes alpha(1-&gt;3) linkage of fucosyl moiety transferred from GDP-beta-L-fucose to N-acetyl glucosamine (GlcNAc) within type 2 lactosamine (LacNAc, Gal-beta(1-&gt;4)GlcNAc) glycan attached to N- or O-linked glycoproteins. Robustly fucosylates nonsialylated distal LacNAc unit of the polylactosamine chain to form Lewis X antigen (CD15), a glycan determinant known to mediate important cellular functions in development and immunity. Fucosylates with lower efficiency sialylated LacNAc acceptors to form sialyl Lewis X and 6-sulfo sialyl Lewis X determinants that serve as recognition epitopes for C-type lectins. Together with FUT7 contributes to SELE, SELL and SELP selectin ligand biosynthesis and selectin-dependent lymphocyte homing, leukocyte migration and blood leukocyte homeostasis. In a cell type specific manner, may also fucosylate the internal LacNAc unit of the polylactosamine chain to form VIM-2 antigen that serves as recognition epitope for SELE. The polypeptide is Alpha-(1,3)-fucosyltransferase 4 (FUT4) (Pan troglodytes (Chimpanzee)).